A 509-amino-acid chain; its full sequence is 2,3-bisphosphoglycerate-independent phosphoglycerate mutase (509 aa).

2 residues coordinate Mn(2+): D14 and S64. The Phosphoserine intermediate role is filled by S64. Substrate is bound by residues H125, 155–156 (RD), R187, R193, 259–262 (RADR), and K332. Mn(2+) contacts are provided by D399, H403, D440, H441, and H459.

This sequence belongs to the BPG-independent phosphoglycerate mutase family. In terms of assembly, monomer. The cofactor is Mn(2+).

It carries out the reaction (2R)-2-phosphoglycerate = (2R)-3-phosphoglycerate. It functions in the pathway carbohydrate degradation; glycolysis; pyruvate from D-glyceraldehyde 3-phosphate: step 3/5. Catalyzes the interconversion of 2-phosphoglycerate and 3-phosphoglycerate. In Aeromonas salmonicida (strain A449), this protein is 2,3-bisphosphoglycerate-independent phosphoglycerate mutase.